A 694-amino-acid chain; its full sequence is Threonine--tRNA ligase (694 aa).

The TGS domain maps to 8–74; sequence NFVNTSVTTH…EETATFTAVP (67 aa). The interval 273–579 is catalytic; that stretch reads DHRRLGTELD…LLEHYAGAFP (307 aa). 3 residues coordinate Zn(2+): cysteine 378, histidine 429, and histidine 556.

The protein belongs to the class-II aminoacyl-tRNA synthetase family. In terms of assembly, homodimer. Requires Zn(2+) as cofactor.

The protein localises to the cytoplasm. The enzyme catalyses tRNA(Thr) + L-threonine + ATP = L-threonyl-tRNA(Thr) + AMP + diphosphate + H(+). Its function is as follows. Catalyzes the attachment of threonine to tRNA(Thr) in a two-step reaction: L-threonine is first activated by ATP to form Thr-AMP and then transferred to the acceptor end of tRNA(Thr). Also edits incorrectly charged L-seryl-tRNA(Thr). The chain is Threonine--tRNA ligase from Corynebacterium efficiens (strain DSM 44549 / YS-314 / AJ 12310 / JCM 11189 / NBRC 100395).